Consider the following 403-residue polypeptide: Phosphopentomutase (403 aa).

Mn(2+) contacts are provided by D13, D298, H303, D339, H340, and H351.

Belongs to the phosphopentomutase family. Requires Mn(2+) as cofactor.

Its subcellular location is the cytoplasm. The enzyme catalyses 2-deoxy-alpha-D-ribose 1-phosphate = 2-deoxy-D-ribose 5-phosphate. It carries out the reaction alpha-D-ribose 1-phosphate = D-ribose 5-phosphate. It participates in carbohydrate degradation; 2-deoxy-D-ribose 1-phosphate degradation; D-glyceraldehyde 3-phosphate and acetaldehyde from 2-deoxy-alpha-D-ribose 1-phosphate: step 1/2. Its function is as follows. Isomerase that catalyzes the conversion of deoxy-ribose 1-phosphate (dRib-1-P) and ribose 1-phosphate (Rib-1-P) to deoxy-ribose 5-phosphate (dRib-5-P) and ribose 5-phosphate (Rib-5-P), respectively. The chain is Phosphopentomutase from Streptococcus equi subsp. zooepidemicus (strain MGCS10565).